Reading from the N-terminus, the 172-residue chain is Adenine phosphoribosyltransferase (172 aa).

The protein belongs to the purine/pyrimidine phosphoribosyltransferase family. In terms of assembly, homodimer.

It is found in the cytoplasm. It catalyses the reaction AMP + diphosphate = 5-phospho-alpha-D-ribose 1-diphosphate + adenine. It functions in the pathway purine metabolism; AMP biosynthesis via salvage pathway; AMP from adenine: step 1/1. Catalyzes a salvage reaction resulting in the formation of AMP, that is energically less costly than de novo synthesis. In Clostridium botulinum (strain Eklund 17B / Type B), this protein is Adenine phosphoribosyltransferase.